The primary structure comprises 122 residues: Small ribosomal subunit protein uS13 (122 aa).

A disordered region spans residues 99-122 (RGQRTHTNARTRKGPAKAIAGKKK).

The protein belongs to the universal ribosomal protein uS13 family. Part of the 30S ribosomal subunit. Forms a loose heterodimer with protein S19. Forms two bridges to the 50S subunit in the 70S ribosome.

Its function is as follows. Located at the top of the head of the 30S subunit, it contacts several helices of the 16S rRNA. In the 70S ribosome it contacts the 23S rRNA (bridge B1a) and protein L5 of the 50S subunit (bridge B1b), connecting the 2 subunits; these bridges are implicated in subunit movement. Contacts the tRNAs in the A and P-sites. The polypeptide is Small ribosomal subunit protein uS13 (Rhizobium meliloti (strain 1021) (Ensifer meliloti)).